Consider the following 387-residue polypeptide: Formate-dependent phosphoribosylglycinamide formyltransferase (387 aa).

Residues 15-16 and Glu75 contribute to the N(1)-(5-phospho-beta-D-ribosyl)glycinamide site; that span reads EL. Residues Arg106, Lys147, 152–157, 187–190, and Glu195 contribute to the ATP site; these read SSGKGQ and EEFI. The ATP-grasp domain occupies 111 to 301; it reads DLASNELNIR…EFELHLRAVL (191 aa). Positions 260 and 272 each coordinate Mg(2+). Residues Asp279, Lys349, and 356–357 each bind N(1)-(5-phospho-beta-D-ribosyl)glycinamide; that span reads RR.

The protein belongs to the PurK/PurT family. Homodimer.

The catalysed reaction is N(1)-(5-phospho-beta-D-ribosyl)glycinamide + formate + ATP = N(2)-formyl-N(1)-(5-phospho-beta-D-ribosyl)glycinamide + ADP + phosphate + H(+). It participates in purine metabolism; IMP biosynthesis via de novo pathway; N(2)-formyl-N(1)-(5-phospho-D-ribosyl)glycinamide from N(1)-(5-phospho-D-ribosyl)glycinamide (formate route): step 1/1. Functionally, involved in the de novo purine biosynthesis. Catalyzes the transfer of formate to 5-phospho-ribosyl-glycinamide (GAR), producing 5-phospho-ribosyl-N-formylglycinamide (FGAR). Formate is provided by PurU via hydrolysis of 10-formyl-tetrahydrofolate. This Prochlorococcus marinus (strain NATL2A) protein is Formate-dependent phosphoribosylglycinamide formyltransferase.